We begin with the raw amino-acid sequence, 266 residues long: Protein phosphatase 1 regulatory subunit 35 (266 aa).

Residues 1 to 10 are compositionally biased toward polar residues; sequence MMVYNGSQLE. Residues 1 to 118 form a disordered region; sequence MMVYNGSQLE…QDLGTPVQQS (118 aa). The span at 21 to 38 shows a compositional bias: pro residues; that stretch reads PGPPPEPRAPEPGAPVPE. Phosphoserine occurs at positions 46 and 51. Residues 62–79 are compositionally biased toward basic residues; that stretch reads GRRKGRADRRGGARKGRQ. The span at 86–97 shows a compositional bias: pro residues; it reads PPSPVRSGPPPA.

It belongs to the PPP1R35 family. Interacts with PPP1CA; this interaction mediates the PPP1CA phosphatase activity inhibition. Interacts with RTTN; this interaction allows the mutual recruitment to the centriole.

The protein localises to the cytoplasm. The protein resides in the cytoskeleton. It localises to the microtubule organizing center. It is found in the centrosome. Its subcellular location is the centriole. Its function is as follows. During centriole duplication, plays a role in the centriole elongation by promoting the recruitment of the microtubule-binding elongation machinery through its interaction with RTTN, leading to the centriole to centrosome conversion. In addition may play a role in the primary cilia assembly. This chain is Protein phosphatase 1 regulatory subunit 35, found in Bos taurus (Bovine).